The primary structure comprises 400 residues: Tyrosine-specific transport system 1 (400 aa).

The next 12 helical transmembrane spans lie at 5 to 25 (VGST…AMPL), 34 to 54 (FTLV…LLFV), 80 to 100 (IIAT…YISG), 117 to 137 (VSVL…THSV), 143 to 163 (VLFF…LPEI), 176 to 196 (ALII…GSIP), 211 to 231 (FSIL…QLST), 250 to 270 (LNGL…ASAV), 273 to 293 (FSTL…LECI), 313 to 333 (LTFI…ILAL), 335 to 355 (YAGQ…VWKA), and 370 to 390 (NLTL…PFAI).

It belongs to the amino acid/polyamine transporter 2 family. Mtr/TnaB/TyrP permease subfamily.

Its subcellular location is the cell inner membrane. The catalysed reaction is L-tyrosine(in) + H(+)(in) = L-tyrosine(out) + H(+)(out). In terms of biological role, transports tyrosine across the cytoplasmic membrane. The transport system is energized by the proton motive force. This Haemophilus influenzae (strain ATCC 51907 / DSM 11121 / KW20 / Rd) protein is Tyrosine-specific transport system 1 (tyrP-A).